We begin with the raw amino-acid sequence, 630 residues long: Putative adenylate cyclase regulatory protein (630 aa).

Residues cysteine 10–glutamine 46 form an RING-type zinc finger. 18 LRR repeats span residues phenylalanine 184–lysine 206, threonine 207–proline 230, glutamine 231–histidine 251, lysine 255–arginine 277, serine 278–serine 301, asparagine 302–isoleucine 324, asparagine 325–valine 347, asparagine 348–serine 370, asparagine 371–asparagine 393, asparagine 394–serine 416, lysine 417–lysine 439, glycine 440–histidine 462, histidine 463–threonine 485, glycine 486–arginine 508, asparagine 509–threonine 531, glycine 532–arginine 554, asparagine 555–valine 577, and asparagine 578–methionine 599.

May interact with adenylate cyclase to regulate its activity. Its function is as follows. May be involved in the postranscriptional regulation of genes in VSG expression sites. The chain is Putative adenylate cyclase regulatory protein (ESAG8C) from Trypanosoma equiperdum.